We begin with the raw amino-acid sequence, 803 residues long: Exocyst complex component 6 (803 aa).

Belongs to the SEC15 family. In terms of assembly, the exocyst complex is composed of EXOC1, EXOC2, EXOC3, EXOC4, EXOC5, EXOC6, EXOC7 and EXOC8. Interacts with CNTRL. Interacts with RAB11A in a GTP-dependent manner.

It localises to the cytoplasm. The protein resides in the perinuclear region. It is found in the cell projection. Its subcellular location is the growth cone. The protein localises to the midbody. It localises to the midbody ring. Component of the exocyst complex involved in the docking of exocytic vesicles with fusion sites on the plasma membrane. Together with RAB11A, RAB3IP, RAB8A, PARD3, PRKCI, ANXA2, CDC42 and DNMBP promotes transcytosis of PODXL to the apical membrane initiation sites (AMIS), apical surface formation and lumenogenesis. The polypeptide is Exocyst complex component 6 (EXOC6) (Canis lupus familiaris (Dog)).